The following is a 36-amino-acid chain: Peptide POLARIS (36 aa).

This sequence belongs to the POLARIS peptide family. In terms of tissue distribution, mostly expressed in the embryonic root from the heart stage and in the seedling primary and lateral root tips, especially in the columella initials and lateral root cap. Also detectable in aerial parts of the seedling, sepals and leaves, principally in vascular tissues of the lamina and petiole.

Functionally, required for correct root growth and vascular development, probably by modulating both cell division rate in meristems and cell elongation in roots. Negative regulator of the ethylene signaling pathway that modulates microtubule cytoskeleton dynamics and auxin transport and homeostasis, and possibly cytokinin signaling, thus influencing root growth and lateral root development. The polypeptide is Peptide POLARIS (PLS) (Arabidopsis thaliana (Mouse-ear cress)).